A 242-amino-acid chain; its full sequence is Purine nucleoside phosphorylase PA4543 (242 aa).

Histidine 69, cysteine 103, and histidine 120 together coordinate Zn(2+).

Belongs to the purine nucleoside phosphorylase YfiH/LACC1 family. In terms of assembly, homodimer. It depends on Cu(2+) as a cofactor. Zn(2+) is required as a cofactor.

It carries out the reaction adenosine + phosphate = alpha-D-ribose 1-phosphate + adenine. The catalysed reaction is S-methyl-5'-thioadenosine + phosphate = 5-(methylsulfanyl)-alpha-D-ribose 1-phosphate + adenine. The enzyme catalyses inosine + phosphate = alpha-D-ribose 1-phosphate + hypoxanthine. It catalyses the reaction adenosine + H2O + H(+) = inosine + NH4(+). Functionally, purine nucleoside enzyme that catalyzes the phosphorolysis of adenosine and inosine nucleosides, yielding D-ribose 1-phosphate and the respective free bases, adenine and hypoxanthine. Also catalyzes the phosphorolysis of S-methyl-5'-thioadenosine into adenine and S-methyl-5-thio-alpha-D-ribose 1-phosphate. Also has adenosine deaminase activity. This chain is Purine nucleoside phosphorylase PA4543, found in Pseudomonas aeruginosa (strain ATCC 15692 / DSM 22644 / CIP 104116 / JCM 14847 / LMG 12228 / 1C / PRS 101 / PAO1).